A 298-amino-acid polypeptide reads, in one-letter code: Protease HtpX homolog (298 aa).

The next 2 membrane-spanning stretches (helical) occupy residues 15–35 (LIMV…GYLF) and 38–58 (SPWT…LIMW). A Zn(2+)-binding site is contributed by histidine 143. Glutamate 144 is an active-site residue. Residue histidine 147 coordinates Zn(2+). The next 2 membrane-spanning stretches (helical) occupy residues 153–173 (ILLS…SGIA) and 197–217 (IIFK…SASL). Glutamate 227 provides a ligand contact to Zn(2+).

This sequence belongs to the peptidase M48B family. It depends on Zn(2+) as a cofactor.

It is found in the cell membrane. This is Protease HtpX homolog from Lactobacillus acidophilus (strain ATCC 700396 / NCK56 / N2 / NCFM).